Here is a 148-residue protein sequence, read N- to C-terminus: MAGILVLNGPNLNLLGVREPGIYGSDTLSDIESRLQAQARVAGMPIDFFQSNAEHALIERIHQAFRDAVDMIIINPGALTHTSVALRDALLATAVPFIEVHISNVHAREPFRRHSYLSDIARGVICGLGPMGYELALQAALQMTHRSL.

Tyrosine 23 serves as the catalytic Proton acceptor. 3 residues coordinate substrate: asparagine 75, histidine 81, and aspartate 88. The active-site Proton donor is histidine 101. Residues 102 to 103 (IS) and arginine 112 contribute to the substrate site.

The protein belongs to the type-II 3-dehydroquinase family. In terms of assembly, homododecamer.

The enzyme catalyses 3-dehydroquinate = 3-dehydroshikimate + H2O. The protein operates within metabolic intermediate biosynthesis; chorismate biosynthesis; chorismate from D-erythrose 4-phosphate and phosphoenolpyruvate: step 3/7. Catalyzes a trans-dehydration via an enolate intermediate. In Methylococcus capsulatus (strain ATCC 33009 / NCIMB 11132 / Bath), this protein is 3-dehydroquinate dehydratase.